Reading from the N-terminus, the 127-residue chain is Small ribosomal subunit protein uS11 (127 aa).

The protein belongs to the universal ribosomal protein uS11 family. In terms of assembly, part of the 30S ribosomal subunit. Interacts with proteins S7 and S18. Binds to IF-3.

Functionally, located on the platform of the 30S subunit, it bridges several disparate RNA helices of the 16S rRNA. Forms part of the Shine-Dalgarno cleft in the 70S ribosome. This chain is Small ribosomal subunit protein uS11, found in Anaeromyxobacter sp. (strain Fw109-5).